We begin with the raw amino-acid sequence, 605 residues long: Arginyl-tRNA--protein transferase 2 (605 aa).

Over residues 496–513 the composition is skewed to low complexity; it reads KVSSSSSSPQASETLLES. The disordered stretch occupies residues 496–549; sequence KVSSSSSSPQASETLLESTSEHEDMEQGDTNDDDDEMYNSDEDSDSDSSSSRNR. Positions 518 to 541 are enriched in acidic residues; the sequence is EDMEQGDTNDDDDEMYNSDEDSDS.

This sequence belongs to the R-transferase family.

It carries out the reaction an N-terminal L-alpha-aminoacyl-[protein] + L-arginyl-tRNA(Arg) = an N-terminal L-arginyl-L-aminoacyl-[protein] + tRNA(Arg) + H(+). In terms of biological role, involved in the post-translational conjugation of arginine to the N-terminal aspartate or glutamate of a protein. This arginylation is required for degradation of the protein via the ubiquitin pathway. Component of the N-end rule pathway with ATE1 and PRT6. The N-end rule pathway regulates seed after-ripening, seedling sugar sensitivity, seedling lipid breakdown, and abscisic acid (ABA) sensitivity of germination. The end-rule pathway regulates various aspects of leaf and shoot development. Involved in the oxygen-dependent N-arginylation of RAP2-12, an activator of hypoxic gene expression. This N-terminal modification leads to ubiquitination by PRT6 and subsequent degradation of RAP2-12 under aerobic conditions. Involved in disease resistance. The end-rule pathway plays a role in regulating the timing and amplitude of the immune response following infection with the bacterial pathogen Pseudomonas syringae pv tomato. Regulates the biosynthesis of plant-defense metabolites such as glucosinolates, and the biosynthesis and response to the phytohormone jasmonate (JA), which plays a key role in plant immunity. The protein is Arginyl-tRNA--protein transferase 2 of Arabidopsis thaliana (Mouse-ear cress).